A 59-amino-acid chain; its full sequence is MSAELKITLVRSHIGTTSKQRAVLNGLGLTKVNKTVVLKNTPEIVGMVQKVAHMVKVVE.

The protein belongs to the universal ribosomal protein uL30 family. In terms of assembly, part of the 50S ribosomal subunit.

The sequence is that of Large ribosomal subunit protein uL30 from Geobacter sulfurreducens (strain ATCC 51573 / DSM 12127 / PCA).